Here is a 1529-residue protein sequence, read N- to C-terminus: ATP-dependent permease PDR15 (1529 aa).

Residues 1–13 (MSSDIRDVEERNS) show a composition bias toward basic and acidic residues. The interval 1–38 (MSSDIRDVEERNSRSSSSSSSSNSAAQSIGQHPYRGFD) is disordered. Topologically, residues 1–531 (MSSDIRDVEE…NFWRMKQSAS (531 aa)) are cytoplasmic. Low complexity predominate over residues 14-24 (RSSSSSSSSNS). In terms of domain architecture, ABC transporter 1 spans 171 to 420 (LRLLKPSKEE…FQDMGYYCPP (250 aa)). The helical transmembrane segment at 532–552 (VTLWQVIGNSVMAFILGSMFY) threads the bilayer. At 553–567 (KVMKKNDTSTFYFRG) the chain is on the extracellular side. N558 is a glycosylation site (N-linked (GlcNAc...) asparagine). A helical transmembrane segment spans residues 568–588 (AAMFFAILFNAFSCLLEIFSL). The Cytoplasmic portion of the chain corresponds to 589-617 (YETRPITEKHRTYSLYHPSADAFASVLSE). Residues 618–638 (MPPKLITAVCFNIIFYFLVDF) traverse the membrane as a helical segment. The Extracellular segment spans residues 639 to 642 (RRNG). A helical membrane pass occupies residues 643–663 (GVFFFYFLINVIATFTLSHLF). Topologically, residues 664 to 699 (RCVGSLTKTLQEAMVPASMLLLAISMYTGFAIPKTK) are cytoplasmic. A helical membrane pass occupies residues 700 to 720 (ILGWSIWIWYINPLAYLFESL). Residues 721–783 (MINEFHDRRF…YDYEHKHKWR (63 aa)) lie on the Extracellular side of the membrane. N-linked (GlcNAc...) asparagine glycosylation is present at N744. A helical transmembrane segment spans residues 784–804 (GFGIGMAYVVFFFFVYLILCE). Topologically, residues 805–1219 (YNEGAKQKGE…LFQQYWRSPD (415 aa)) are cytoplasmic. Residues 829–840 (EGKLQEKHRPGD) show a composition bias toward basic and acidic residues. Residues 829–873 (EGKLQEKHRPGDIENNAGSSPDSATTEKKILDDSSEGSDSSSDNA) form a disordered region. In terms of domain architecture, ABC transporter 2 spans 884–1127 (FHWRDLCYDV…MIDYFESKGA (244 aa)). An ATP-binding site is contributed by 920 to 927 (GASGAGKT). The helical transmembrane segment at 1220 to 1240 (YLWSKFILTIFNQVFIGFTFF) threads the bilayer. Residues 1241-1312 (KADRSLQGLQ…VEIPWNILAG (72 aa)) are Extracellular-facing. A helical transmembrane segment spans residues 1313–1333 (TIAYCIYYYAVGFYANASAAG). Residues 1334–1340 (QLHERGA) lie on the Cytoplasmic side of the membrane. The chain crosses the membrane as a helical span at residues 1341 to 1361 (LFWLFSIAFYVYIGSMGLLMI). Residues 1362–1368 (SFNEVAE) lie on the Extracellular side of the membrane. Residues 1369–1389 (TAAHMGTLLFTMALSFCGVMA) form a helical membrane-spanning segment. The Cytoplasmic portion of the chain corresponds to 1390-1396 (TPKVMPR). A helical membrane pass occupies residues 1397–1417 (FWIFMYRVSPLTYMIDALLAL). Residues 1418-1492 (GVANVDVKCS…SSHYYRRWRN (75 aa)) lie on the Extracellular side of the membrane. Residues 1493–1513 (YGIFICYIAFDYIAATFLYWL) form a helical membrane-spanning segment. At 1514 to 1529 (SRVPKKNGKISEKPKK) the chain is on the cytoplasmic side.

It belongs to the ABC transporter superfamily. ABCG family. PDR (TC 3.A.1.205) subfamily.

It localises to the membrane. The polypeptide is ATP-dependent permease PDR15 (PDR15) (Saccharomyces cerevisiae (strain ATCC 204508 / S288c) (Baker's yeast)).